Consider the following 284-residue polypeptide: Short-chain dehydrogenase RED1 (284 aa).

Positions 11, 37, 58, 86, 151, 155, 184, and 186 each coordinate NADP(+). Tyr151 serves as the catalytic Proton acceptor. The active-site Lowers pKa of active site Tyr is Lys155.

This sequence belongs to the short-chain dehydrogenases/reductases (SDR) family.

The protein operates within polyketide biosynthesis. In terms of biological role, short-chain dehydrogenase; part of the gene cluster that mediates the biosynthesis of pyriculol and pyriculariol, two heptaketides that induce lesion formation upon application on rice leaves but are dispensable for pathogenicity. The highly reducing polyketide synthase synthesizes the heptaketide backbone of pyriculol and pyriculariol. Pyriculol and pyriculariol contain several hydroxyl moieties and double bonds, so it can be assumed that several reduction steps occur during biosynthesis. These reactions could be executed by PKS19 itself or partly by the tailoring enzymes OXR1, OXR2, RED1, RED2 or RED3, identified within the cluster. The FAD-linked oxidoreductase OXR1 is the only tailoring enzyme for which the function has been determined yet, and is involved in the oxidation of dihydropyriculol and dihydropyriculariol into pyriculol and pyriculariol, respectively. This Pyricularia oryzae (strain 70-15 / ATCC MYA-4617 / FGSC 8958) (Rice blast fungus) protein is Short-chain dehydrogenase RED1.